The following is a 114-amino-acid chain: Beta-microseminoprotein (114 aa).

The signal sequence occupies residues 1-20 (MNVLLGGFVIFATFVTLCNA). Intrachain disulfides connect C22/C70, C38/C62, C57/C93, C60/C69, and C84/C107.

It belongs to the beta-microseminoprotein family. In terms of assembly, homodimer; Interacts with PI16.

Its subcellular location is the secreted. In Macaca mulatta (Rhesus macaque), this protein is Beta-microseminoprotein (MSMB).